A 345-amino-acid polypeptide reads, in one-letter code: SLAM family member 5 (345 aa).

Positions Met-1 to Gly-21 are cleaved as a signal peptide. At Lys-22–Gly-225 the chain is on the extracellular side. In terms of domain architecture, Ig-like V-type spans Ile-26–Tyr-129. The 73-residue stretch at Pro-135 to Ser-207 folds into the Ig-like C2-type domain. A glycan (N-linked (GlcNAc...) asparagine) is linked at Asn-150. A disulfide bridge connects residues Cys-155 and Cys-193. A helical transmembrane segment spans residues Leu-226–Phe-246. Topologically, residues Arg-247–Ile-345 are cytoplasmic. The ITSM 1 motif lies at Thr-277 to Ile-282. Position 279 is a phosphotyrosine (Tyr-279). Tyr-296 is modified (phosphotyrosine; by LYN). The short motif at Thr-314–Val-319 is the ITSM 2 element. Tyr-316 is modified (phosphotyrosine). A disordered region spans residues Gly-326 to Ile-345. The span at Ala-328–Ile-345 shows a compositional bias: polar residues. Position 341 is a phosphotyrosine; by FES (Tyr-341).

Homodimer; via its extracellular domain. Forms a head to tail dimer with a CD48 molecule from another cell. Interacts with SH2 domain-containing proteins SH2D1A/SAP and SH2D1B/EAT-2. Interacts with tyrosine-protein phosphatases PTPN6/SHP-1 and PTPN11//SHP-2 via its phosphorylated cytoplasmic domain, and this interaction is blocked by SH2D1A. Interacts (via phosphorylated ITSM 1 and 2) with INPP5D/SHIP1. Post-translationally, phosphorylated by tyrosine-protein kinase LCK on tyrosine residues following ligation induced by agonist monoclonal antibody. The association with SH2D1A is dependent of tyrosine phosphorylation of its cytoplasmic domain. Phosphorylated on Tyr-296 and Tyr-316 following platelet aggregation. Phosphorylated on tyrosine residues upon high affinity immunoglobulin epsilon receptor aggregation in mast cells. In terms of processing, N-glycosylated. In terms of tissue distribution, predominantly expressed in hematopoietic tissues, such as lymph node, spleen and peripheral leukocytes. Expressed in macrophages, B-cells, monocytes, platelets, thymocytes, T-cells and dendritic cells. Highly expressed in memory T-cells. Expressed in mast cells.

The protein resides in the cell membrane. In terms of biological role, self-ligand receptor of the signaling lymphocytic activation molecule (SLAM) family. SLAM receptors triggered by homo- or heterotypic cell-cell interactions are modulating the activation and differentiation of a wide variety of immune cells and thus are involved in the regulation and interconnection of both innate and adaptive immune response. Activities are controlled by presence or absence of small cytoplasmic adapter proteins, SH2D1A/SAP and/or SH2D1B/EAT-2. Can mediate natural killer (NK) cell cytotoxicity dependent on SH2D1A and SH2D1B. Increases proliferative responses of activated T-cells and SH2D1A/SAP does not seem be required for this process. Homophilic interactions enhance interferon gamma/IFNG secretion in lymphocytes and induce platelet stimulation via a SH2D1A-dependent pathway. May serve as a marker for hematopoietic progenitor cells Required for a prolonged T-cell:B-cell contact, optimal T follicular helper function, and germinal center formation. In germinal centers involved in maintaining B-cell tolerance and in preventing autoimmunity. In mast cells negatively regulates high affinity immunoglobulin epsilon receptor signaling; independent of SH2D1A and SH2D1B but implicating FES and PTPN6/SHP-1. In macrophages enhances LPS-induced MAPK phosphorylation and NF-kappaB activation and modulates LPS-induced cytokine secretion; involving ITSM 2. Positively regulates macroautophagy in primary dendritic cells via stabilization of IRF8; inhibits TRIM21-mediated proteasomal degradation of IRF8. The chain is SLAM family member 5 (CD84) from Homo sapiens (Human).